Reading from the N-terminus, the 127-residue chain is Nuclear transport factor 2 (127 aa).

Position 4 is an N6-acetyllysine (Lys-4). Residues 10–121 enclose the NTF2 domain; that stretch reads IGSSFIQHYY…WVCTNDMFRL (112 aa).

As to quaternary structure, homodimer. Interacts with RAN (GDP-bound form); the interaction is direct and regulates RAN nuclear import. Interacts with the nucleoporins NUP54, NUP58 and NUP62 (via FG repeats); recruits NUTF2 to the nuclear pore complex a step required for NUTF2-mediated GDP-bound RAN nuclear import. Interacts with CAPG; mediates its nuclear import.

It is found in the cytoplasm. Its subcellular location is the cytosol. The protein resides in the nucleus outer membrane. It localises to the nucleus. The protein localises to the nuclear pore complex. It is found in the nucleus inner membrane. Its subcellular location is the nucleoplasm. Functionally, mediates the import of GDP-bound RAN from the cytoplasm into the nucleus which is essential for the function of RAN in cargo receptor-mediated nucleocytoplasmic transport. Thereby, plays indirectly a more general role in cargo receptor-mediated nucleocytoplasmic transport. Interacts with GDP-bound RAN in the cytosol, recruits it to the nuclear pore complex via its interaction with nucleoporins and promotes its nuclear import. In Bos taurus (Bovine), this protein is Nuclear transport factor 2.